The sequence spans 87 residues: Putative outer membrane protein ArbH (87 aa).

Residues 1 to 23 form the signal peptide; that stretch reads MKIKNSYLVIASLLYPISFISTA.

Belongs to the porin LamB (TC 1.B.3) family.

The protein resides in the cell outer membrane. Its function is as follows. May be a sugar porin with a broad carbohydrate specificity. In Dickeya chrysanthemi (Pectobacterium chrysanthemi), this protein is Putative outer membrane protein ArbH (arbH).